The sequence spans 624 residues: MAIRSSGRKLSFEILSQNSSFENDDTSIRRSSSDPITGNVASESPRDYGKRKRSKKKKKKVNQVETILENGDSHSTIITGSSGDFGETTTMFENRLNYYGGGGSGSSGGGCVVTLLDGQTVHHNGFNFGELRQRNVNGSVDGSNDERWSDTLSSDKKLYMEETSVELSPSENPPFQEVQHQFPRSEINGNVVRRLDTEASLDWKQLVADDPDFLSAETRSPMKYFMEEIYGGISLRSTTTPGNDIERERIYDTIFRLPWRCEVLIDTGFFVCVNSFLSLLTVMPIRVLLIFMDAFKNRQFRRPSASELSDLACFLVLATGTILLGRTDISLIYHMIRGQSTIKLYVVYNILEIFDRLCQSFCGDVFGALFSSAKGLSISPPEKLRFSTWRFVSDLALTMAASILHSFILLAQAITLSTCIVAHNNALLALLVSNNFAEIKSSVFKRFSKDNIHGLVYADSIERFHISAFLVSVLAQNILESEGAWFGNFIYNATTVFFCEMMIDIIKHSFLAKFNDIKPIAYSEFLQALCEQTLNIRPEDRKTNLTFVPLAPACVVIRVLTPVYAAHLPYSPLPWRMLWMVILFVITYIMLTSLKVLIGMGLRKHATWYINRCRRRNSSHLHND.

The disordered stretch occupies residues 20–63; that stretch reads SFENDDTSIRRSSSDPITGNVASESPRDYGKRKRSKKKKKKVNQ. Residues 33–42 are compositionally biased toward polar residues; it reads SDPITGNVAS. Residues 49–61 show a composition bias toward basic residues; it reads GKRKRSKKKKKKV. 6 helical membrane-spanning segments follow: residues 263–283, 305–325, 391–411, 413–433, 545–565, and 578–598; these read VLIDTGFFVCVNSFLSLLTVM, ASELSDLACFLVLATGTILLG, FVSDLALTMAASILHSFILLA, AITLSTCIVAHNNALLALLVS, LTFVPLAPACVVIRVLTPVYA, and LWMVILFVITYIMLTSLKVLI.

This sequence belongs to the TAPT1 family. Interacts with CRT3, but not with CRT1 or CNX. In terms of tissue distribution, expressed in inflorescences, siliques, roots and shoots. Expressed in early embryo, endosperm, mature pollen and pollen tubes, synergide cells and weakly in antipodal cells.

It localises to the membrane. It is found in the endoplasmic reticulum lumen. Functionally, probable component of the calreticulin 3 (CRT3) complex, acting probably as a co-chaperone involved in protein retention in the endoplasmic reticulum lumen. Required for micropylar pollen tube guidance. Plays an essential role in cell plate orientation or positioning in early embryo patterning. In Arabidopsis thaliana (Mouse-ear cress), this protein is Protein POLLEN DEFECTIVE IN GUIDANCE 1 (POD1).